The following is a 591-amino-acid chain: Potassium channel KAT4 (591 aa).

Residues 1–32 (MAARSELLRPAFGEASPSLGRFVINPHSCSYR) lie on the Cytoplasmic side of the membrane. Residues 33–53 (WWHMFLIMLVLYSAWASPFEL) traverse the membrane as a helical segment. The Extracellular portion of the chain corresponds to 54–63 (SMEKAASIAL). The helical transmembrane segment at 64-84 (VVTDLVVDVFFAIDIALSFFV) threads the bilayer. The Cytoplasmic segment spans residues 85–109 (AYRDTSTGLLITDRRKITMRYLKRP). The helical transmembrane segment at 110–130 (CFALDVASTIPLQIIYQLVTG) threads the bilayer. Residues 131-137 (KRQGLWG) lie on the Extracellular side of the membrane. The chain crosses the membrane as a helical; Voltage-sensor span at residues 138 to 158 (LLNLLRLWRLRRVSKLFARVE). Residues 159–172 (KDIRFNYLWTRLIK) lie on the Cytoplasmic side of the membrane. Residues 173–193 (LLCVTLFALHFAACIYLWMAF) form a helical membrane-spanning segment. At 194-220 (NYKIKELTWIGSQIHSFEDRSVWFCYT) the chain is on the extracellular side. Positions 221–240 (CAVYWSITTLATVGYGDLHA) form an intramembrane region, pore-forming. The Extracellular portion of the chain corresponds to 241–246 (TNIGEM). A helical membrane pass occupies residues 247–267 (LFSIAFMLFNMGLTSYIIGNI). At 268 to 591 (TNLVVRETSN…IRDGDHLLFS (324 aa)) the chain is on the cytoplasmic side. 349–469 (LFQGVSDSLI…YIVFSNFIQY (121 aa)) contacts a nucleoside 3',5'-cyclic phosphate. Residues 521–591 (RVVIHEQLPN…IRDGDHLLFS (71 aa)) enclose the KHA domain.

Belongs to the potassium channel family. Plant (TC 1.A.1.4) subfamily.

It localises to the membrane. Functionally, probable inward-rectifying potassium channel. Assuming opened or closed conformations in response to the voltage difference across the membrane, the channel is activated by hyperpolarization. The sequence is that of Potassium channel KAT4 from Oryza sativa subsp. japonica (Rice).